A 188-amino-acid polypeptide reads, in one-letter code: Pyridoxal 5'-phosphate synthase subunit PdxT (188 aa).

L-glutamine is bound at residue 47–49 (GES). Cys-79 functions as the Nucleophile in the catalytic mechanism. L-glutamine contacts are provided by residues Arg-106 and 134 to 135 (IR). Active-site charge relay system residues include His-169 and Glu-171.

The protein belongs to the glutaminase PdxT/SNO family. As to quaternary structure, in the presence of PdxS, forms a dodecamer of heterodimers. Only shows activity in the heterodimer.

The catalysed reaction is aldehydo-D-ribose 5-phosphate + D-glyceraldehyde 3-phosphate + L-glutamine = pyridoxal 5'-phosphate + L-glutamate + phosphate + 3 H2O + H(+). It catalyses the reaction L-glutamine + H2O = L-glutamate + NH4(+). Its pathway is cofactor biosynthesis; pyridoxal 5'-phosphate biosynthesis. Functionally, catalyzes the hydrolysis of glutamine to glutamate and ammonia as part of the biosynthesis of pyridoxal 5'-phosphate. The resulting ammonia molecule is channeled to the active site of PdxS. This Caldicellulosiruptor saccharolyticus (strain ATCC 43494 / DSM 8903 / Tp8T 6331) protein is Pyridoxal 5'-phosphate synthase subunit PdxT.